The primary structure comprises 77 residues: Large ribosomal subunit protein bL31 (77 aa).

The protein belongs to the bacterial ribosomal protein bL31 family. Type A subfamily. In terms of assembly, part of the 50S ribosomal subunit.

Its function is as follows. Binds the 23S rRNA. This is Large ribosomal subunit protein bL31 from Synechococcus elongatus (strain ATCC 33912 / PCC 7942 / FACHB-805) (Anacystis nidulans R2).